A 373-amino-acid chain; its full sequence is Ferroptosis suppressor protein 1 (373 aa).

A lipid anchor (N-myristoyl glycine) is attached at Gly2. The helical transmembrane segment at 7 to 27 (VESGALHVVIVGGGFGGIAAA) threads the bilayer. 6-hydroxy-FAD is bound by residues 18 to 22 (GGGFG), Arg54, and Val82. Lys168 is modified (N6-acetyllysine; by KAT2B). Asp285 lines the 6-hydroxy-FAD pocket.

Belongs to the FAD-dependent oxidoreductase family. In terms of assembly, interacts with importin subunits KPNA2 and IPO5; this interaction likely mediates the translocation into the nucleus upon oxidative stress. Requires 6-hydroxy-FAD as cofactor. Post-translationally, N-myristoylation at Gly-2 mediates the recruitment to lipid droplets and plasma membrane, enabling its anti-lipid peroxidation activity. In terms of processing, acetylation at Lys-168 prevents AIFM2 ubiquitination and degradation, thereby inhibiting ferroptosis. KAT2B mediates acetylation at Lys-168, while HDAC3 removes it. Ubiquitinated. AIFM2 undergoes 'Lys-29'-ubiquitination and proteasomal degradation, which is inhibited by acetylation at Lys-168. Detected in most normal tissues as two transcripts of 1.8 and 4.0 kb in length, respectively. Highly expressed in heart, moderately in liver and skeletal muscles, and expressed at low levels in placenta, lung, kidney, and pancreas. Both transcripts expressed following p53/TP53 induction. The shorter 1.8 kb transcript seems to be the major transcript in EB1 colon cancer cells.

Its subcellular location is the lipid droplet. It localises to the cell membrane. It is found in the cytoplasm. The protein localises to the mitochondrion membrane. The protein resides in the nucleus. It catalyses the reaction ubiquinone-10 + NADH + H(+) = ubiquinol-10 + NAD(+). It carries out the reaction phylloquinone + NADH + H(+) = phylloquinol + NAD(+). The catalysed reaction is menaquinone-4 + NADH + H(+) = menaquinol-4 + NAD(+). The enzyme catalyses menadione + NADH + H(+) = menadiol + NAD(+). The modification by 4-hydroxy-2-nonenal (HNE) adduction in mitochondria results in loss of the oxidoreductase activity and activation of a novel function in mitochondrial oxidative stress signaling. In terms of biological role, a NAD(P)H-dependent oxidoreductase that acts as a key inhibitor of ferroptosis. At the plasma membrane, catalyzes reduction of coenzyme Q/ubiquinone-10 to ubiquinol-10, a lipophilic radical-trapping antioxidant that prevents lipid oxidative damage and consequently ferroptosis. Acts in parallel to GPX4 to suppress phospholipid peroxidation and ferroptosis. This anti-ferroptotic function is independent of cellular glutathione levels. Also acts as a potent radical-trapping antioxidant by mediating warfarin-resistant vitamin K reduction in the canonical vitamin K cycle: catalyzes NAD(P)H-dependent reduction of vitamin K (phylloquinone, menaquinone-4 and menadione) to hydroquinone forms. Hydroquinones act as potent radical-trapping antioxidants inhibitor of phospholipid peroxidation and ferroptosis. May play a role in mitochondrial stress signaling. Upon oxidative stress, associates with the lipid peroxidation end product 4-hydroxy-2-nonenal (HNE) forming a lipid adduct devoid of oxidoreductase activity, which then translocates from mitochondria into the nucleus triggering DNA damage and cell death. Capable of DNA binding in a non-sequence specific way. The polypeptide is Ferroptosis suppressor protein 1 (Homo sapiens (Human)).